Consider the following 47-residue polypeptide: MKKLRWVLLIVIIAGCLLLWTQMLNVMCDQDVQFFSGICTINKFIPW.

Residues 6–26 (WVLLIVIIAGCLLLWTQMLNV) form a helical membrane-spanning segment.

This sequence belongs to the MgrB family. In terms of assembly, may form homooligomers. Probably interacts with the periplasmic domain of PhoQ.

Its subcellular location is the cell inner membrane. In terms of biological role, phoP-regulated transcription is redox-sensitive, being activated when the periplasm becomes more reducing. MgrB acts between DsbA/DsbB and PhoP/PhoQ in this pathway. Represses PhoP/PhoQ signaling, possibly by binding to the periplasmic domain of PhoQ, altering its activity and that of downstream effector PhoP. This is PhoP/PhoQ regulator MgrB from Klebsiella pneumoniae (strain 342).